The chain runs to 181 residues: Oligoribonuclease (181 aa).

Positions 8 to 171 (LIWVDLEMTG…EDIKESIAEM (164 aa)) constitute an Exonuclease domain. Tyr-129 is an active-site residue.

The protein belongs to the oligoribonuclease family.

The protein localises to the cytoplasm. Its function is as follows. 3'-to-5' exoribonuclease specific for small oligoribonucleotides. The polypeptide is Oligoribonuclease (Shewanella frigidimarina (strain NCIMB 400)).